A 256-amino-acid polypeptide reads, in one-letter code: Thiazole synthase (256 aa).

Lys95 acts as the Schiff-base intermediate with DXP in catalysis. 1-deoxy-D-xylulose 5-phosphate contacts are provided by residues Gly156, 182–183, and 204–205; these read AG and NT.

The protein belongs to the ThiG family. Homotetramer. Forms heterodimers with either ThiH or ThiS.

It localises to the cytoplasm. It carries out the reaction [ThiS sulfur-carrier protein]-C-terminal-Gly-aminoethanethioate + 2-iminoacetate + 1-deoxy-D-xylulose 5-phosphate = [ThiS sulfur-carrier protein]-C-terminal Gly-Gly + 2-[(2R,5Z)-2-carboxy-4-methylthiazol-5(2H)-ylidene]ethyl phosphate + 2 H2O + H(+). It functions in the pathway cofactor biosynthesis; thiamine diphosphate biosynthesis. Catalyzes the rearrangement of 1-deoxy-D-xylulose 5-phosphate (DXP) to produce the thiazole phosphate moiety of thiamine. Sulfur is provided by the thiocarboxylate moiety of the carrier protein ThiS. In vitro, sulfur can be provided by H(2)S. This is Thiazole synthase from Photobacterium profundum (strain SS9).